The sequence spans 327 residues: Phenylalanine--tRNA ligase alpha subunit (327 aa).

Glutamate 252 contacts Mg(2+).

The protein belongs to the class-II aminoacyl-tRNA synthetase family. Phe-tRNA synthetase alpha subunit type 1 subfamily. As to quaternary structure, tetramer of two alpha and two beta subunits. Mg(2+) serves as cofactor.

It is found in the cytoplasm. The enzyme catalyses tRNA(Phe) + L-phenylalanine + ATP = L-phenylalanyl-tRNA(Phe) + AMP + diphosphate + H(+). The sequence is that of Phenylalanine--tRNA ligase alpha subunit from Cronobacter sakazakii (strain ATCC BAA-894) (Enterobacter sakazakii).